The following is a 230-amino-acid chain: LexA repressor (230 aa).

Residues 28 to 48 constitute a DNA-binding region (H-T-H motif); it reads LREIGAHMGIRSTNGVNDHLR. Active-site for autocatalytic cleavage activity residues include Ser-149 and Lys-186.

Belongs to the peptidase S24 family. As to quaternary structure, homodimer.

The catalysed reaction is Hydrolysis of Ala-|-Gly bond in repressor LexA.. Its function is as follows. Represses a number of genes involved in the response to DNA damage (SOS response), including recA and lexA. In the presence of single-stranded DNA, RecA interacts with LexA causing an autocatalytic cleavage which disrupts the DNA-binding part of LexA, leading to derepression of the SOS regulon and eventually DNA repair. This chain is LexA repressor, found in Sorangium cellulosum (strain So ce56) (Polyangium cellulosum (strain So ce56)).